The chain runs to 148 residues: NADPH-dependent 7-cyano-7-deazaguanine reductase (148 aa).

Cysteine 50 functions as the Thioimide intermediate in the catalytic mechanism. The active-site Proton donor is the aspartate 57. Substrate is bound by residues valine 72–serine 74 and histidine 91–glutamate 92.

It belongs to the GTP cyclohydrolase I family. QueF type 1 subfamily.

The protein localises to the cytoplasm. The enzyme catalyses 7-aminomethyl-7-carbaguanine + 2 NADP(+) = 7-cyano-7-deazaguanine + 2 NADPH + 3 H(+). Its pathway is tRNA modification; tRNA-queuosine biosynthesis. Its function is as follows. Catalyzes the NADPH-dependent reduction of 7-cyano-7-deazaguanine (preQ0) to 7-aminomethyl-7-deazaguanine (preQ1). This chain is NADPH-dependent 7-cyano-7-deazaguanine reductase, found in Helicobacter pylori (strain ATCC 700392 / 26695) (Campylobacter pylori).